We begin with the raw amino-acid sequence, 641 residues long: 1-phosphatidylinositol 4,5-bisphosphate phosphodiesterase zeta-1 (641 aa).

Residues 35–70 form the EF-hand domain; it reads CSYIHVKRIFKDNDRLKQGRITIEEFRAIYRILTHR. One can recognise a PI-PLC X-box domain in the interval 155-299; sequence QDMTHPLNDY…LKFKVLVKNK (145 aa). Active-site residues include H170 and H215. Residues 382 to 498 form the PI-PLC Y-box domain; sequence LSDLVIYTKA…GYILKPHFLR (117 aa). A C2 domain is found at 498 to 622; it reads RESESYFNPS…KGYRRVPLFS (125 aa).

Interacts via its C2 domain with PtdIns(3)P and, to a lesser extent, PtdIns(5)P in vitro. Ca(2+) serves as cofactor.

It is found in the nucleus. The protein localises to the cytoplasm. The protein resides in the perinuclear region. The enzyme catalyses a 1,2-diacyl-sn-glycero-3-phospho-(1D-myo-inositol-4,5-bisphosphate) + H2O = 1D-myo-inositol 1,4,5-trisphosphate + a 1,2-diacyl-sn-glycerol + H(+). In terms of biological role, the production of the second messenger molecules diacylglycerol (DAG) and inositol 1,4,5-trisphosphate (IP3) is mediated by activated phosphatidylinositol-specific phospholipase C enzymes. In vitro, hydrolyzes PtdIns(4,5)P2 in a Ca(2+)-dependent manner. Triggers intracellular Ca(2+) oscillations in oocytes solely during M phase and is involved in inducing oocyte activation and initiating embryonic development up to the blastocyst stage. Is therefore a strong candidate for the egg-activating soluble sperm factor that is transferred from the sperm into the egg cytoplasm following gamete membrane fusion. May exert an inhibitory effect on phospholipase-C-coupled processes that depend on calcium ions and protein kinase C, including CFTR trafficking and function. In Macaca fascicularis (Crab-eating macaque), this protein is 1-phosphatidylinositol 4,5-bisphosphate phosphodiesterase zeta-1.